The chain runs to 508 residues: Photosystem II CP47 reaction center protein (508 aa).

A run of 6 helical transmembrane segments spans residues 21-36 (AVHI…WAGS), 101-115 (IVFS…IWHW), 140-156 (GIHL…FGAF), 203-218 (IAAG…FHLS), 237-252 (VLSS…AFVV), and 457-472 (SFAL…HGSR).

It belongs to the PsbB/PsbC family. PsbB subfamily. In terms of assembly, PSII is composed of 1 copy each of membrane proteins PsbA, PsbB, PsbC, PsbD, PsbE, PsbF, PsbH, PsbI, PsbJ, PsbK, PsbL, PsbM, PsbT, PsbX, PsbY, PsbZ, Psb30/Ycf12, at least 3 peripheral proteins of the oxygen-evolving complex and a large number of cofactors. It forms dimeric complexes. It depends on Binds multiple chlorophylls. PSII binds additional chlorophylls, carotenoids and specific lipids. as a cofactor.

The protein resides in the plastid. Its subcellular location is the chloroplast thylakoid membrane. Its function is as follows. One of the components of the core complex of photosystem II (PSII). It binds chlorophyll and helps catalyze the primary light-induced photochemical processes of PSII. PSII is a light-driven water:plastoquinone oxidoreductase, using light energy to abstract electrons from H(2)O, generating O(2) and a proton gradient subsequently used for ATP formation. This chain is Photosystem II CP47 reaction center protein, found in Lotus japonicus (Lotus corniculatus var. japonicus).